A 946-amino-acid chain; its full sequence is Rho GTPase-activating protein 4 (946 aa).

One can recognise an F-BAR domain in the interval 19-317; it reads TQVKEMRWQL…AVEALDPPGD (299 aa). Residues 128 to 195 are a coiled coil; sequence LAQRLSHIAE…REAERQEEKR (68 aa). A compositionally biased stretch (basic and acidic residues) spans 187–196; sequence EAERQEEKRA. Disordered regions lie at residues 187–220 and 402–435; these read EAER…SLKK and LDSF…QQQE. Low complexity-rich tracts occupy residues 202 to 211 and 407 to 419; these read TTTAGATEAG and TSPS…STSS. Residues 507–695 form the Rho-GAP domain; sequence GDMEKFIQSS…TLIVQPDRVF (189 aa). The SH3 domain maps to 746-805; that stretch reads EGVVEAVACFAYTGRTAQELSFRRGDVLRLHERASSDWWRGEHNGMRGLIPHKYITLPAG. Ser860, Ser901, and Ser906 each carry phosphoserine. The tract at residues 885-946 is disordered; the sequence is KTSVRQGLGP…QGLDTTPKPH (62 aa). Residues 901-910 show a composition bias toward pro residues; the sequence is SPGPRSPKAP. Over residues 924–934 the composition is skewed to low complexity; sequence GPGAPASPSAS.

Interacts with NCKAP1L. Predominantly in hematopoietic cells (spleen, thymus and leukocytes); low levels in placenta, lung and various fetal tissues.

It localises to the cytoplasm. In terms of biological role, inhibitory effect on stress fiber organization. May down-regulate Rho-like GTPase in hematopoietic cells. The chain is Rho GTPase-activating protein 4 from Homo sapiens (Human).